The primary structure comprises 479 residues: Hydrogenase-4 component D (479 aa).

15 consecutive transmembrane segments (helical) span residues 3-23, 30-50, 55-75, 80-100, 117-137, 168-188, 208-228, 238-258, 270-290, 300-320, 330-350, 369-389, 390-410, 411-431, and 458-478; these read NLAL…SFSP, WGVL…SAFY, VAVT…LVID, LILF…TGYL, AFLL…TLLG, ALLI…TLFL, LVYG…PMQA, TPIS…YIFA, VIGG…FLMY, LAWS…LSIF, IAYI…AGAL, LPLP…VPPF, NGFF…VEYW, ILLP…AWFI, and LVLI…ATWL.

It belongs to the complex I subunit 5 family.

Its subcellular location is the cell inner membrane. Its function is as follows. Possible component of hydrogenase 4. The chain is Hydrogenase-4 component D from Escherichia coli (strain K12).